The sequence spans 200 residues: Holliday junction resolvase RecU (200 aa).

4 residues coordinate Mg(2+): T82, D84, E97, and Q116.

This sequence belongs to the RecU family. Requires Mg(2+) as cofactor.

It localises to the cytoplasm. The enzyme catalyses Endonucleolytic cleavage at a junction such as a reciprocal single-stranded crossover between two homologous DNA duplexes (Holliday junction).. Functionally, endonuclease that resolves Holliday junction intermediates in genetic recombination. Cleaves mobile four-strand junctions by introducing symmetrical nicks in paired strands. Promotes annealing of linear ssDNA with homologous dsDNA. Required for DNA repair, homologous recombination and chromosome segregation. The polypeptide is Holliday junction resolvase RecU (Streptococcus gordonii (strain Challis / ATCC 35105 / BCRC 15272 / CH1 / DL1 / V288)).